The sequence spans 968 residues: RNA polymerase-associated protein RapA (968 aa).

Residues D164–N334 enclose the Helicase ATP-binding domain. D177–T184 provides a ligand contact to ATP. Positions D280–H283 match the DEAH box motif. The Helicase C-terminal domain maps to R490–D644.

This sequence belongs to the SNF2/RAD54 helicase family. RapA subfamily. As to quaternary structure, interacts with the RNAP. Has a higher affinity for the core RNAP than for the holoenzyme. Its ATPase activity is stimulated by binding to RNAP.

In terms of biological role, transcription regulator that activates transcription by stimulating RNA polymerase (RNAP) recycling in case of stress conditions such as supercoiled DNA or high salt concentrations. Probably acts by releasing the RNAP, when it is trapped or immobilized on tightly supercoiled DNA. Does not activate transcription on linear DNA. Probably not involved in DNA repair. The sequence is that of RNA polymerase-associated protein RapA from Enterobacter sp. (strain 638).